Consider the following 453-residue polypeptide: Probable glycine dehydrogenase (decarboxylating) subunit 1 (453 aa).

The protein belongs to the GcvP family. N-terminal subunit subfamily. The glycine cleavage system is composed of four proteins: P, T, L and H. In this organism, the P 'protein' is a heterodimer of two subunits.

It catalyses the reaction N(6)-[(R)-lipoyl]-L-lysyl-[glycine-cleavage complex H protein] + glycine + H(+) = N(6)-[(R)-S(8)-aminomethyldihydrolipoyl]-L-lysyl-[glycine-cleavage complex H protein] + CO2. In terms of biological role, the glycine cleavage system catalyzes the degradation of glycine. The P protein binds the alpha-amino group of glycine through its pyridoxal phosphate cofactor; CO(2) is released and the remaining methylamine moiety is then transferred to the lipoamide cofactor of the H protein. The sequence is that of Probable glycine dehydrogenase (decarboxylating) subunit 1 from Erythrobacter litoralis (strain HTCC2594).